The following is a 293-amino-acid chain: 2-pyrone-4,6-dicarboxylate hydrolase (293 aa).

A disordered region spans residues 1–20; it reads MTNDERILSWNETPSKPRYT. Residues 29–31, tyrosine 47, serine 75, arginine 122, arginine 128, tyrosine 154, and histidine 178 each bind substrate; that span reads HCH. Aspartate 246 acts as the Proton acceptor in catalysis. Asparagine 251 contributes to the substrate binding site.

Belongs to the metallo-dependent hydrolases superfamily. PDC hydrolase family. As to quaternary structure, monomer.

It catalyses the reaction 2-oxo-2H-pyran-4,6-dicarboxylate + H2O = (1E)-4-oxobut-1-ene-1,2,4-tricarboxylate + H(+). It functions in the pathway secondary metabolite metabolism; lignin degradation. Its activity is regulated as follows. Strongly inhibited by 1 mM Zn(2+) ions. Also inhibited by pyridine-2,4-dicarboxylic acid, 5-hydroxyisophthalic acid and 5,5'-dithiobis(2-nitrobenzoic acid) (Ellman reagent). In terms of biological role, contributes to the degradation of lignin at the level of the protocatechuate 4,5-cleavage pathway. Catalyzes the hydrolysis of 2-pyrone-4,6-dicarboxylate (PDC) to (4E)-oxalomesaconate (OMA). The keto form of OMA can tautomerize into the enol form, 4-carboxy-2-hydroxymuconate (CHM), under certain pH conditions. Also catalyzes the reverse reaction. Is essential for the growth of Sphingobium sp. SYK-6 on vanillate but is not responsible for the growth of this strain on syringate. The protein is 2-pyrone-4,6-dicarboxylate hydrolase of Sphingobium sp. (strain NBRC 103272 / SYK-6).